The chain runs to 282 residues: Cyclic AMP-dependent transcription factor ATF-5 (282 aa).

A required for protein stabilization induced by IL1B region spans residues 1–21 (MSLLATLGLELDRALLPASGL). Lys-29 bears the N6-acetyllysine; by EP300 mark. Disordered regions lie at residues 116 to 152 (FLDA…DLPQ) and 173 to 238 (EEVG…ALEG). The tract at residues 119 to 217 (APPLPPPSPP…GDRKQKKRDQ (99 aa)) is interaction with PTP4A1. Positions 120–140 (PPLPPPSPPPLPPPPLPPAPS) are enriched in pro residues. Residues 141 to 150 (LPLSLPSFDL) are compositionally biased toward low complexity. A compositionally biased stretch (pro residues) spans 178–194 (PPLPPPQQPPPPSPPQP). Residues 208–271 (GDRKQKKRDQ…QYVKDLLIEV (64 aa)) form the bZIP domain. Residues 210 to 230 (RKQKKRDQNKSAALRYRQRKR) are basic motif. Positions 236–250 (LEGECQGLEARNREL) are leucine-zipper. Phosphoserine is present on Ser-256.

Belongs to the bZIP family. In terms of assembly, binds DNA as a dimer. Interacts with PTP4A1/PRL-1. Interacts with CCND3, but not with CCND1 or CCND2. Interacts with HSPA1A or HSPA1B; the interaction protects ATF5 from degradation via proteasome-dependent and caspase-dependent processes. Interacts (via C-terminal region) with NPM1 (via C-terminal region); the interaction leads to loss of association between HSPA1A or HSPA1B and ATF5 and promotes ATF5 degradation via proteasome-dependent and caspase-dependent processes. Interacts with NLK; the interaction stabilizes ATF5 at the protein level in a kinase-independent manner. Interacts with alpha-tubulin, gamma-tubulin members TUBGCP2 and TUBGCP4, PCNT; the ATF5:PCNT:polyglutamylated tubulin (PGT) tripartite unites the mother centriole and the pericentriolar material (PCM) in the centrosome. Interacts with CEBPB and EP300; EP300 is required for ATF5 and CEBPB interaction and DNA binding. Post-translationally, ubiquitinated by CDC34 and UBE2B in order to be degraded by the proteasome. Cisplatin inhibits ubiquitination and proteasome-mediated degradation by inhibiting the interaction with CDC34. Ubiquitination and degradation by the proteasome are inhibited by NLK in a kinase-independent manner. Phosphorylated by NLK, probably at Ser-92, Thr-94, Ser-126 and Ser-190. In terms of processing, acetylated at Lys-29 by EP300, the acetylation enhances the interaction with CEBPB, DNA-binding and transactivation activity. As to expression, widely expressed with higher expression levels in liver.

It localises to the cytoplasm. Its subcellular location is the nucleus. The protein resides in the cytoskeleton. The protein localises to the microtubule organizing center. It is found in the centrosome. Its function is as follows. Transcription factor that either stimulates or represses gene transcription through binding of different DNA regulatory elements such as cAMP response element (CRE) (consensus: 5'-GTGACGT[AC][AG]-3'), ATF5-specific response element (ARE) (consensus: 5'-C[CT]TCT[CT]CCTT[AT]-3') but also the amino acid response element (AARE), present in many viral and cellular promoters. Critically involved, often in a cell type-dependent manner, in cell survival, proliferation, and differentiation. Its transcriptional activity is enhanced by CCND3 and slightly inhibited by CDK4. Important regulator of the cerebral cortex formation, functions in cerebral cortical neuroprogenitor cells to maintain proliferation and to block differentiation into neurons. Must be down-regulated in order for such cells to exit the cycle and differentiate. Participates in the pathways by which SHH promotes cerebellar granule neuron progenitor cells proliferation. Critical for survival of mature olfactory sensory neurons (OSN), directs expression of OSN-specific genes. May be involved in osteogenic differentiation. Promotes cell proliferation and survival by inducing the expression of EGR1 sinergistically with ELK1. Once acetylated by EP300, binds to ARE sequences on target genes promoters, such as BCL2 and EGR1. Plays an anti-apoptotic role through the transcriptional regulation of BCL2, this function seems to be cell type-dependent. Cooperates with NR1I3/CAR in the transcriptional activation of CYP2B6 in liver. In hepatic cells, represses CRE-dependent transcription and inhibits proliferation by blocking at G2/M phase. May act as a negative regulator of IL1B transduction pathway in liver. Upon IL1B stimulus, cooperates with NLK to activate the transactivation activity of C/EBP subfamily members. Besides its function of transcription factor, acts as a cofactor of CEBPB to activate CEBPA and promote adipocyte differentiation. Regulates centrosome dynamics in a cell-cycle- and centriole-age-dependent manner. Forms 9-foci symmetrical ring scaffold around the mother centriole to control centrosome function and the interaction between centrioles and pericentriolar material. The sequence is that of Cyclic AMP-dependent transcription factor ATF-5 (ATF5) from Homo sapiens (Human).